Here is a 149-residue protein sequence, read N- to C-terminus: Large ribosomal subunit protein uL15 (149 aa).

A disordered region spans residues 14-63; the sequence is ASRKRVGRGSGSGLGCTSGKGNKGQNARAGGGVRPGFEGGQMPLQRRLPK. Composition is skewed to gly residues over residues 21 to 35 and 42 to 52; these read RGSG…GKGN and AGGGVRPGFEG.

It belongs to the universal ribosomal protein uL15 family. In terms of assembly, part of the 50S ribosomal subunit.

In terms of biological role, binds to the 23S rRNA. In Nitratidesulfovibrio vulgaris (strain DSM 19637 / Miyazaki F) (Desulfovibrio vulgaris), this protein is Large ribosomal subunit protein uL15.